Reading from the N-terminus, the 115-residue chain is uncharacterized protein (115 aa).

Positions 1-74 (MGTGLRSQSL…VPGSLGDTEQ (74 aa)) are disordered.

This is an uncharacterized protein from Homo sapiens (Human).